The primary structure comprises 247 residues: 5'-nucleotidase SurE (247 aa).

A divalent metal cation-binding residues include Asp-8, Asp-9, Ser-39, and Asn-91.

The protein belongs to the SurE nucleotidase family. A divalent metal cation is required as a cofactor.

It localises to the cytoplasm. It carries out the reaction a ribonucleoside 5'-phosphate + H2O = a ribonucleoside + phosphate. Its function is as follows. Nucleotidase that shows phosphatase activity on nucleoside 5'-monophosphates. The sequence is that of 5'-nucleotidase SurE from Pelobacter propionicus (strain DSM 2379 / NBRC 103807 / OttBd1).